The primary structure comprises 459 residues: Cysteine--tRNA ligase (459 aa).

C31 provides a ligand contact to Zn(2+). The short motif at P33–N43 is the 'HIGH' region element. Positions 216, 241, and 245 each coordinate Zn(2+). Residues K274–S278 carry the 'KMSKS' region motif. ATP is bound at residue K277.

Belongs to the class-I aminoacyl-tRNA synthetase family. As to quaternary structure, monomer. It depends on Zn(2+) as a cofactor.

It localises to the cytoplasm. The catalysed reaction is tRNA(Cys) + L-cysteine + ATP = L-cysteinyl-tRNA(Cys) + AMP + diphosphate. This is Cysteine--tRNA ligase from Rickettsia peacockii (strain Rustic).